The primary structure comprises 107 residues: Serine palmitoyltransferase-regulating protein TSC3 (107 aa).

Residues 72-92 form a helical membrane-spanning segment; that stretch reads VFFLVVFTLSLFGLLKWVLSL.

Its subcellular location is the endoplasmic reticulum membrane. In terms of biological role, stimulates the activity of serine palmitoyltransferase (SPT). The protein is Serine palmitoyltransferase-regulating protein TSC3 (TSC3) of Eremothecium gossypii (strain ATCC 10895 / CBS 109.51 / FGSC 9923 / NRRL Y-1056) (Yeast).